The primary structure comprises 586 residues: MERDSHGNASPARTPSAGASPAQASPAGTPPGRASPAQASPAQASPAGTPPGRASPAQASPAGTPPGRASPGRASPAQASPAQASPARASPALASLSRSSSGRSSSARSASVTTSPTRVYLVRATPVGAVPIRSSPARSAPATRATRESPGTSLPKFTWREGQKQLPLIGCVLLLIALVVSLIILFQFWQGHTGIRYKEQRESCPKHAVRCDGVVDCKLKSDELGCVRFDWDKSLLKIYSGSSHQWLPICSSNWNDSYSEKTCQQLGFESAHRTTEVAHRDFANSFSILRYNSTIQESLHRSECPSQRYISLQCSHCGLRAMTGRIVGGALASDSKWPWQVSLHFGTTHICGGTLIDAQWVLTAAHCFFVTREKVLEGWKVYAGTSNLHQLPEAASIAEIIINSNYTDEEDDYDIALMRLSKPLTLSAHIHPACLPMHGQTFSLNETCWITGFGKTRETDDKTSPFLREVQVNLIDFKKCNDYLVYDSYLTPRMMCAGDLRGGRDSCQGDSGGPLVCEQNNRWYLAGVTSWGTGCGQRNKPGVYTKVTEVLPWIYSKMEVRSLQQDTAPSRLGTSSGGDPGGAPRL.

Disordered regions lie at residues 1 to 115 (MERD…VTTS) and 131 to 157 (PIRS…LPKF). At 1–165 (MERDSHGNAS…KFTWREGQKQ (165 aa)) the chain is on the cytoplasmic side. The stretch at 9-13 (ASPAR) is one 1-1 repeat. The tract at residues 9–93 (ASPARTPSAG…ASPARASPAL (85 aa)) is 13 X 5 AA repeats of A-S-P-A-[GLQR]. The stretch at 14-18 (TPSAG) is one 2-1; approximate repeat. The segment covering 14–52 (TPSAGASPAQASPAGTPPGRASPAQASPAQASPAGTPPG) has biased composition (low complexity). Residues 14–68 (TPSAGASPAQASPAGTPPGRASPAQASPAQASPAGTPPGRASPAQASPAGTPPGR) form a 4 X 5 AA repeats of T-P-P-G-R region. Repeat copies occupy residues 19-23 (ASPAQ), 24-28 (ASPAG), 29-33 (TPPGR), 34-38 (ASPAQ), 39-43 (ASPAQ), 44-48 (ASPAG), 49-53 (TPPGR), 54-58 (ASPAQ), 59-63 (ASPAG), and 64-68 (TPPGR). One copy of the 1-9; approximate repeat lies at 69–78 (ASPGRASPAQ). 2 stretches are compositionally biased toward low complexity: residues 69 to 111 (ASPG…RSAS) and 133 to 144 (RSSPARSAPATR). 3 consecutive repeat copies span residues 79 to 83 (ASPAQ), 84 to 88 (ASPAR), and 89 to 93 (ASPAL). Residues 166 to 186 (LPLIGCVLLLIALVVSLIILF) traverse the membrane as a helical; Signal-anchor for type II membrane protein segment. Topologically, residues 187 to 586 (QFWQGHTGIR…GGDPGGAPRL (400 aa)) are extracellular. An SRCR domain is found at 195–325 (IRYKEQRESC…HCGLRAMTGR (131 aa)). Positions 204–226 (CPKHAVRCDGVVDCKLKSDELGC) constitute an LDL-receptor class A domain. Cystine bridges form between cysteine 250/cysteine 314, cysteine 263/cysteine 317, and cysteine 351/cysteine 367. 2 N-linked (GlcNAc...) asparagine glycosylation sites follow: asparagine 255 and asparagine 292. The Peptidase S1 domain occupies 326 to 559 (IVGGALASDS…VLPWIYSKME (234 aa)). Histidine 366 serves as the catalytic Charge relay system. N-linked (GlcNAc...) asparagine glycosylation is present at asparagine 405. The active-site Charge relay system is the aspartate 414. An N-linked (GlcNAc...) asparagine glycan is attached at asparagine 445. Disulfide bonds link cysteine 448–cysteine 517, cysteine 480–cysteine 496, and cysteine 507–cysteine 535. The active-site Charge relay system is serine 511. Over residues 565–574 (QDTAPSRLGT) the composition is skewed to polar residues. The tract at residues 565–586 (QDTAPSRLGTSSGGDPGGAPRL) is disordered. A compositionally biased stretch (gly residues) spans 575–586 (SSGGDPGGAPRL).

Belongs to the peptidase S1 family. In terms of assembly, interacts with SPINT1/HAI-1; the interaction promotes the phosphorylation and cell membrane localization of TMPRSS13. Interacts with SPINT2/HAI-2; the interaction promotes the phosphorylation and cell membrane localization of TMPRSS13. In terms of processing, the inactive zymogen is post-translationally modified and then trafficked to the cell surface, whereby it undergoes autocatalytic cleavage resulting in an activated form that is released extracellularly. Phosphorylation is required for localization at the cell surface. Phosphorylation increases following inhibition of protease activity by SPINT2/HAI-2. Post-translationally, N-glycosylation of Asn-405 and Asn-445 is required for exit from the endoplasmic reticulum and trafficking to the cell surface. Also required for autocleavage of the zymogen, activation and secretion of the mature protein. Expressed in placenta. As to expression, predominantly expressed in lung, placenta, pancreas, and prostate. In terms of tissue distribution, expressed in lung, placenta, pancreas, and prostate. Weakly expressed in testis and peripheral blood lymphocytes.

It is found in the cell membrane. It localises to the secreted. The protein resides in the cytoplasm. Its activity is regulated as follows. Cleavage of HGF is inhibited by SPINT1/HAI-1 via the BPTI/Kunitz inhibitor 1 domain. Functionally, serine protease. Cleaves the proform of PRSS8/prostasin to form the active protein. Cleaves the proform of HGF to form the active protein which promotes MAPK signaling. Promotes the formation of the stratum corneum and subsequently the epidermal barrier in embryos. In Homo sapiens (Human), this protein is Transmembrane protease serine 13 (TMPRSS13).